Here is a 349-residue protein sequence, read N- to C-terminus: Anthranilate phosphoribosyltransferase (349 aa).

5-phospho-alpha-D-ribose 1-diphosphate contacts are provided by residues Gly-82, Gly-85 to Asp-86, Asn-92 to Thr-95, Lys-110 to Gly-118, and Ser-122. Gly-82 contributes to the anthranilate binding site. A Mg(2+)-binding site is contributed by Ser-94. Position 113 (Asn-113) interacts with anthranilate. Residue Arg-168 participates in anthranilate binding. Mg(2+)-binding residues include Asp-227 and Glu-228.

This sequence belongs to the anthranilate phosphoribosyltransferase family. In terms of assembly, homodimer. Mg(2+) is required as a cofactor.

The enzyme catalyses N-(5-phospho-beta-D-ribosyl)anthranilate + diphosphate = 5-phospho-alpha-D-ribose 1-diphosphate + anthranilate. The protein operates within amino-acid biosynthesis; L-tryptophan biosynthesis; L-tryptophan from chorismate: step 2/5. Catalyzes the transfer of the phosphoribosyl group of 5-phosphorylribose-1-pyrophosphate (PRPP) to anthranilate to yield N-(5'-phosphoribosyl)-anthranilate (PRA). In Pseudomonas putida (strain ATCC 700007 / DSM 6899 / JCM 31910 / BCRC 17059 / LMG 24140 / F1), this protein is Anthranilate phosphoribosyltransferase.